The chain runs to 348 residues: NADH-ubiquinone oxidoreductase chain 2 (348 aa).

11 consecutive transmembrane segments (helical) span residues 3 to 23, 25 to 45, 67 to 87, 95 to 115, 118 to 138, 149 to 171, 178 to 198, 203 to 223, 240 to 260, 274 to 294, and 324 to 344; these read PVVLTIIISSLGLGTMMTFIG, HWLLVWMGLEINTLAIIPLMI, SALLLFASITNAWSLGEWSLL, ATLVTIALALKIGLAPMHFWL, VLQGLDLITGLILATWQKLAP, LNSNLLLFLGVSSTVIGGWGGLN, ILAYSSIAHLGWMITILHYSP, LNLALYIIMTLTTFLLFKLFN, LSIIALITLLSLGGLPPLSGF, DLAIPATIMALAALLSLFFYL, and LILMMATSLSILLLPLTPTIF.

Belongs to the complex I subunit 2 family.

The protein localises to the mitochondrion inner membrane. It carries out the reaction a ubiquinone + NADH + 5 H(+)(in) = a ubiquinol + NAD(+) + 4 H(+)(out). Its function is as follows. Core subunit of the mitochondrial membrane respiratory chain NADH dehydrogenase (Complex I) that is believed to belong to the minimal assembly required for catalysis. Complex I functions in the transfer of electrons from NADH to the respiratory chain. The immediate electron acceptor for the enzyme is believed to be ubiquinone. This is NADH-ubiquinone oxidoreductase chain 2 (MT-ND2) from Squalus acanthias (Spiny dogfish).